The sequence spans 120 residues: NAD(P)H-quinone oxidoreductase subunit 3 (120 aa).

Helical transmembrane passes span 6-26 (GYDA…LALV), 64-84 (MFAL…PWAV), and 89-109 (LGLL…VALA).

It belongs to the complex I subunit 3 family. NDH-1 can be composed of about 15 different subunits; different subcomplexes with different compositions have been identified which probably have different functions.

Its subcellular location is the cellular thylakoid membrane. The enzyme catalyses a plastoquinone + NADH + (n+1) H(+)(in) = a plastoquinol + NAD(+) + n H(+)(out). It carries out the reaction a plastoquinone + NADPH + (n+1) H(+)(in) = a plastoquinol + NADP(+) + n H(+)(out). In terms of biological role, NDH-1 shuttles electrons from an unknown electron donor, via FMN and iron-sulfur (Fe-S) centers, to quinones in the respiratory and/or the photosynthetic chain. The immediate electron acceptor for the enzyme in this species is believed to be plastoquinone. Couples the redox reaction to proton translocation, and thus conserves the redox energy in a proton gradient. Cyanobacterial NDH-1 also plays a role in inorganic carbon-concentration. The sequence is that of NAD(P)H-quinone oxidoreductase subunit 3 from Synechococcus sp. (strain WH7803).